The chain runs to 259 residues: Probable WRKY transcription factor 65 (259 aa).

The span at 1–17 (MKRGLDMARSYNDHESS) shows a compositional bias: basic and acidic residues. Disordered regions lie at residues 1 to 101 (MKRG…RCSS) and 126 to 165 (TSEH…EEED). Over residues 18-31 (QETGPESPNSSTFN) the composition is skewed to polar residues. Positions 47–69 (RSVEKRVVNVPMKEMEGSRHKGD) are enriched in basic and acidic residues. Residues 68 to 134 (GDTTPPSDSW…YTSEHNHPWP (67 aa)) constitute a DNA-binding region (WRKY). Acidic residues predominate over residues 154 to 165 (EPEVEPEAEEED).

It localises to the nucleus. In terms of biological role, transcription factor. Interacts specifically with the W box (5'-(T)TGAC[CT]-3'), a frequently occurring elicitor-responsive cis-acting element. This is Probable WRKY transcription factor 65 (WRKY65) from Arabidopsis thaliana (Mouse-ear cress).